Here is a 314-residue protein sequence, read N- to C-terminus: Putative S-adenosyl-L-methionine-dependent methyltransferase MAV_4441 (314 aa).

S-adenosyl-L-methionine contacts are provided by residues Asp138 and 167 to 168 (DL).

This sequence belongs to the UPF0677 family.

Functionally, exhibits S-adenosyl-L-methionine-dependent methyltransferase activity. The polypeptide is Putative S-adenosyl-L-methionine-dependent methyltransferase MAV_4441 (Mycobacterium avium (strain 104)).